The following is a 295-amino-acid chain: Pyridoxal 5'-phosphate synthase subunit PdxS (295 aa).

D25 provides a ligand contact to D-ribose 5-phosphate. Residue K82 is the Schiff-base intermediate with D-ribose 5-phosphate of the active site. Residue G154 participates in D-ribose 5-phosphate binding. Position 166 (R166) interacts with D-glyceraldehyde 3-phosphate. D-ribose 5-phosphate-binding positions include G215 and 236 to 237 (GS).

The protein belongs to the PdxS/SNZ family. In the presence of PdxT, forms a dodecamer of heterodimers.

The enzyme catalyses aldehydo-D-ribose 5-phosphate + D-glyceraldehyde 3-phosphate + L-glutamine = pyridoxal 5'-phosphate + L-glutamate + phosphate + 3 H2O + H(+). It participates in cofactor biosynthesis; pyridoxal 5'-phosphate biosynthesis. Catalyzes the formation of pyridoxal 5'-phosphate from ribose 5-phosphate (RBP), glyceraldehyde 3-phosphate (G3P) and ammonia. The ammonia is provided by the PdxT subunit. Can also use ribulose 5-phosphate and dihydroxyacetone phosphate as substrates, resulting from enzyme-catalyzed isomerization of RBP and G3P, respectively. In Shouchella clausii (strain KSM-K16) (Alkalihalobacillus clausii), this protein is Pyridoxal 5'-phosphate synthase subunit PdxS.